Here is a 98-residue protein sequence, read N- to C-terminus: uncharacterized protein (98 aa).

This is an uncharacterized protein from Frog virus 3 (isolate Goorha) (FV-3).